A 259-amino-acid chain; its full sequence is Phosphate import ATP-binding protein PstB 1 (259 aa).

An ABC transporter domain is found at 7 to 254 (VKPEDVYQIN…PDDHRTKDYI (248 aa)). 45–52 (GPSGCGKS) is an ATP binding site.

It belongs to the ABC transporter superfamily. Phosphate importer (TC 3.A.1.7) family. In terms of assembly, the complex is composed of two ATP-binding proteins (PstB), two transmembrane proteins (PstC and PstA) and a solute-binding protein (PstS).

It localises to the cell membrane. The catalysed reaction is phosphate(out) + ATP + H2O = ADP + 2 phosphate(in) + H(+). Part of the ABC transporter complex PstSACB involved in phosphate import. Responsible for energy coupling to the transport system. This is Phosphate import ATP-binding protein PstB 1 from Bacillus licheniformis (strain ATCC 14580 / DSM 13 / JCM 2505 / CCUG 7422 / NBRC 12200 / NCIMB 9375 / NCTC 10341 / NRRL NRS-1264 / Gibson 46).